The chain runs to 247 residues: Cationic trypsin-3 (247 aa).

Residues 1-15 form the signal peptide; that stretch reads MKALIFLAFLGAAVA. Positions 16-24 are cleaved as a propeptide — activation peptide; that stretch reads LPLDDDDDK. In terms of domain architecture, Peptidase S1 spans 25–245; it reads IVGGYTCQKN…YVNWIQQTVA (221 aa). 6 cysteine pairs are disulfide-bonded: C31-C161, C49-C65, C133-C234, C140-C207, C172-C186, and C197-C221. The Charge relay system role is filled by H64. The Ca(2+) site is built by E76, N78, V81, and E86. D108 (charge relay system) is an active-site residue. S201 (charge relay system) is an active-site residue.

It belongs to the peptidase S1 family. It depends on Ca(2+) as a cofactor.

Its subcellular location is the secreted. The protein resides in the extracellular space. The catalysed reaction is Preferential cleavage: Arg-|-Xaa, Lys-|-Xaa.. This chain is Cationic trypsin-3 (Try3), found in Rattus norvegicus (Rat).